A 115-amino-acid polypeptide reads, in one-letter code: MKFVLLFGVFLVTLFSYSSAEMLDDFDQADEDELLSLIEKEEARAKECIPRFYDCSHDRHSCCRSELFKDVCTCFYPKGGDNEVCTCQQPKHLKYMEKAADKAKKFGGKIKKWFG.

A signal peptide spans 1-20; that stretch reads MKFVLLFGVFLVTLFSYSSA. The propeptide occupies 21-44; that stretch reads EMLDDFDQADEDELLSLIEKEEAR. 4 disulfides stabilise this stretch: C48/C63, C55/C72, C62/C87, and C74/C85.

This sequence belongs to the neurotoxin 19 (CSTX) family. 01 subfamily. As to expression, expressed by the venom gland.

It localises to the secreted. This Lycosa singoriensis (Wolf spider) protein is U3-lycotoxin-Ls1i.